Reading from the N-terminus, the 228-residue chain is Endonuclease V (228 aa).

Positions 43 and 109 each coordinate Mg(2+).

It belongs to the endonuclease V family. Mg(2+) is required as a cofactor.

The protein localises to the cytoplasm. It carries out the reaction Endonucleolytic cleavage at apurinic or apyrimidinic sites to products with a 5'-phosphate.. Functionally, DNA repair enzyme involved in the repair of deaminated bases. Selectively cleaves double-stranded DNA at the second phosphodiester bond 3' to a deoxyinosine leaving behind the intact lesion on the nicked DNA. The polypeptide is Endonuclease V (Dictyoglomus turgidum (strain DSM 6724 / Z-1310)).